Consider the following 171-residue polypeptide: Probable deoxyuridine 5'-triphosphate nucleotidohydrolase (171 aa).

Belongs to the dCTP deaminase family. Archaeal dUTPase subfamily.

The catalysed reaction is dUTP + H2O = dUMP + diphosphate + H(+). It functions in the pathway pyrimidine metabolism; dUMP biosynthesis; dUMP from dCTP (dUTP route): step 2/2. This enzyme is involved in nucleotide metabolism: it produces dUMP, the immediate precursor of thymidine nucleotides and it decreases the intracellular concentration of dUTP so that uracil cannot be incorporated into DNA. This is Probable deoxyuridine 5'-triphosphate nucleotidohydrolase from Methanosarcina mazei (strain ATCC BAA-159 / DSM 3647 / Goe1 / Go1 / JCM 11833 / OCM 88) (Methanosarcina frisia).